The primary structure comprises 158 residues: Transcription elongation factor GreA (158 aa).

A coiled-coil region spans residues 14-76 (LDQLKDELTH…EIESILKNVK (63 aa)).

Belongs to the GreA/GreB family.

Necessary for efficient RNA polymerase transcription elongation past template-encoded arresting sites. The arresting sites in DNA have the property of trapping a certain fraction of elongating RNA polymerases that pass through, resulting in locked ternary complexes. Cleavage of the nascent transcript by cleavage factors such as GreA or GreB allows the resumption of elongation from the new 3'terminus. GreA releases sequences of 2 to 3 nucleotides. This is Transcription elongation factor GreA from Acholeplasma laidlawii (strain PG-8A).